Here is a 240-residue protein sequence, read N- to C-terminus: UDP-2,3-diacylglucosamine hydrolase (240 aa).

Positions 8, 10, 41, 79, and 114 each coordinate Mn(2+). Substrate is bound at residue 79-80; sequence NR. The substrate site is built by Asp-122, Ser-160, Asn-164, Lys-167, and His-195. Mn(2+)-binding residues include His-195 and His-197.

The protein belongs to the LpxH family. It depends on Mn(2+) as a cofactor.

It localises to the cell inner membrane. It carries out the reaction UDP-2-N,3-O-bis[(3R)-3-hydroxytetradecanoyl]-alpha-D-glucosamine + H2O = 2-N,3-O-bis[(3R)-3-hydroxytetradecanoyl]-alpha-D-glucosaminyl 1-phosphate + UMP + 2 H(+). The protein operates within glycolipid biosynthesis; lipid IV(A) biosynthesis; lipid IV(A) from (3R)-3-hydroxytetradecanoyl-[acyl-carrier-protein] and UDP-N-acetyl-alpha-D-glucosamine: step 4/6. Its function is as follows. Hydrolyzes the pyrophosphate bond of UDP-2,3-diacylglucosamine to yield 2,3-diacylglucosamine 1-phosphate (lipid X) and UMP by catalyzing the attack of water at the alpha-P atom. Involved in the biosynthesis of lipid A, a phosphorylated glycolipid that anchors the lipopolysaccharide to the outer membrane of the cell. This Serratia proteamaculans (strain 568) protein is UDP-2,3-diacylglucosamine hydrolase.